The sequence spans 217 residues: Probable transaldolase (217 aa).

The active-site Schiff-base intermediate with substrate is the K84.

It belongs to the transaldolase family. Type 3B subfamily.

It localises to the cytoplasm. It catalyses the reaction D-sedoheptulose 7-phosphate + D-glyceraldehyde 3-phosphate = D-erythrose 4-phosphate + beta-D-fructose 6-phosphate. The protein operates within carbohydrate degradation; pentose phosphate pathway; D-glyceraldehyde 3-phosphate and beta-D-fructose 6-phosphate from D-ribose 5-phosphate and D-xylulose 5-phosphate (non-oxidative stage): step 2/3. In terms of biological role, transaldolase is important for the balance of metabolites in the pentose-phosphate pathway. This Roseiflexus castenholzii (strain DSM 13941 / HLO8) protein is Probable transaldolase.